The sequence spans 95 residues: Small ribosomal subunit protein bS6 (95 aa).

The protein belongs to the bacterial ribosomal protein bS6 family.

Binds together with bS18 to 16S ribosomal RNA. This is Small ribosomal subunit protein bS6 from Streptococcus agalactiae serotype Ia (strain ATCC 27591 / A909 / CDC SS700).